Here is a 214-residue protein sequence, read N- to C-terminus: Orotate phosphoribosyltransferase (214 aa).

Lysine 26 lines the 5-phospho-alpha-D-ribose 1-diphosphate pocket. 34 to 35 (FF) contributes to the orotate binding site. 5-phospho-alpha-D-ribose 1-diphosphate is bound by residues 72-73 (YK), arginine 99, lysine 100, lysine 103, histidine 105, and 124-132 (DDVITAGTA). Residues threonine 128 and arginine 156 each contribute to the orotate site.

The protein belongs to the purine/pyrimidine phosphoribosyltransferase family. PyrE subfamily. Homodimer. It depends on Mg(2+) as a cofactor.

It catalyses the reaction orotidine 5'-phosphate + diphosphate = orotate + 5-phospho-alpha-D-ribose 1-diphosphate. The protein operates within pyrimidine metabolism; UMP biosynthesis via de novo pathway; UMP from orotate: step 1/2. In terms of biological role, catalyzes the transfer of a ribosyl phosphate group from 5-phosphoribose 1-diphosphate to orotate, leading to the formation of orotidine monophosphate (OMP). This chain is Orotate phosphoribosyltransferase, found in Pasteurella multocida (strain Pm70).